The primary structure comprises 185 residues: Ribosome-recycling factor (185 aa).

The protein belongs to the RRF family.

It localises to the cytoplasm. In terms of biological role, responsible for the release of ribosomes from messenger RNA at the termination of protein biosynthesis. May increase the efficiency of translation by recycling ribosomes from one round of translation to another. The polypeptide is Ribosome-recycling factor (Shewanella sp. (strain ANA-3)).